We begin with the raw amino-acid sequence, 131 residues long: MSAKTDEILDSLKSLSLLEASELVKQIEEAFGVSAAASAGVVMAAPGAAAGGDGADAAEEKTEFEVVLESFDASSKIKVLKEVRNATGLGLGEAKALVEAAPKTIKEGATKEDAEALKKAIEAVGGKVTLK.

This sequence belongs to the bacterial ribosomal protein bL12 family. As to quaternary structure, homodimer. Part of the ribosomal stalk of the 50S ribosomal subunit. Forms a multimeric L10(L12)X complex, where L10 forms an elongated spine to which 2 to 4 L12 dimers bind in a sequential fashion. Binds GTP-bound translation factors.

Its function is as follows. Forms part of the ribosomal stalk which helps the ribosome interact with GTP-bound translation factors. Is thus essential for accurate translation. This Prochlorococcus marinus (strain NATL1A) protein is Large ribosomal subunit protein bL12.